The sequence spans 373 residues: MTNRWSFDVKKNLVTLILTWLCLSISTAQAARIKDVSEVAGVRSNQLIGYGLVSGLPGTGESTPFTDQSFNAMLQNFGIQLPPGTKPKTKNVAAVMVTTTLPAFAKQGQVVDITVSSVGSAKSLRGGTLLQTFLKGLDGKTYAIAQGNLIVSGFSATGADGSKIVGNNPTVGRISGGAMVEREVPSPFGRGDFITFNLLDSDFTTAQRMADAVNNFLGPNMASAVDATSVRVRAPRDISQRVAFLSAVENVNFDPADGSAKIIVNSRTGTIVVGKHVRLRAAAVTHGGMTVAIKENQQVSQPGPFGNGKTVVTQDSDIEVTEKQGKMFKFEPGLTLDDLVRAVNEVGAAPSDLMAILQALKQAGAIEGQLIII.

The first 30 residues, 1–30, serve as a signal peptide directing secretion; the sequence is MTNRWSFDVKKNLVTLILTWLCLSISTAQA.

It belongs to the FlgI family. In terms of assembly, the basal body constitutes a major portion of the flagellar organelle and consists of four rings (L,P,S, and M) mounted on a central rod.

The protein localises to the periplasm. It localises to the bacterial flagellum basal body. Functionally, assembles around the rod to form the L-ring and probably protects the motor/basal body from shearing forces during rotation. This is Flagellar P-ring protein from Aliivibrio salmonicida (strain LFI1238) (Vibrio salmonicida (strain LFI1238)).